Here is a 119-residue protein sequence, read N- to C-terminus: Putative membrane protein insertion efficiency factor (119 aa).

The protein belongs to the UPF0161 family.

Its subcellular location is the cell inner membrane. In terms of biological role, could be involved in insertion of integral membrane proteins into the membrane. This chain is Putative membrane protein insertion efficiency factor, found in Brucella anthropi (strain ATCC 49188 / DSM 6882 / CCUG 24695 / JCM 21032 / LMG 3331 / NBRC 15819 / NCTC 12168 / Alc 37) (Ochrobactrum anthropi).